We begin with the raw amino-acid sequence, 538 residues long: Histone-arginine methyltransferase CARMER (538 aa).

Positions Ala148–His457 constitute an SAM-dependent MTase PRMT-type domain. The S-adenosyl-L-methionine site is built by Gln161, Arg170, Gly194, Glu216, Glu245, and Thr273. Arg508 is modified (asymmetric dimethylarginine; by autocatalysis).

It belongs to the class I-like SAM-binding methyltransferase superfamily. Protein arginine N-methyltransferase family. As to quaternary structure, homodimer. The dimethylated protein is the major form.

It is found in the cytoplasm. The protein resides in the nucleus. It catalyses the reaction L-arginyl-[protein] + 2 S-adenosyl-L-methionine = N(omega),N(omega)-dimethyl-L-arginyl-[protein] + 2 S-adenosyl-L-homocysteine + 2 H(+). Methylates (mono- and asymmetric dimethylation) the guanidino nitrogens of arginyl residues in proteins. May methylate histone H3 at 'Arg-17' and activate transcription via chromatin remodeling. The sequence is that of Histone-arginine methyltransferase CARMER (Art4) from Drosophila virilis (Fruit fly).